We begin with the raw amino-acid sequence, 62 residues long: UPF0291 protein CLJ_B2839 (62 aa).

It belongs to the UPF0291 family.

The protein localises to the cytoplasm. This Clostridium botulinum (strain 657 / Type Ba4) protein is UPF0291 protein CLJ_B2839.